The primary structure comprises 309 residues: Porphobilinogen deaminase (309 aa).

Cys-241 carries the S-(dipyrrolylmethanemethyl)cysteine modification.

The protein belongs to the HMBS family. As to quaternary structure, monomer. Requires dipyrromethane as cofactor.

It carries out the reaction 4 porphobilinogen + H2O = hydroxymethylbilane + 4 NH4(+). It participates in porphyrin-containing compound metabolism; protoporphyrin-IX biosynthesis; coproporphyrinogen-III from 5-aminolevulinate: step 2/4. Tetrapolymerization of the monopyrrole PBG into the hydroxymethylbilane pre-uroporphyrinogen in several discrete steps. This chain is Porphobilinogen deaminase, found in Oceanobacillus iheyensis (strain DSM 14371 / CIP 107618 / JCM 11309 / KCTC 3954 / HTE831).